Reading from the N-terminus, the 334-residue chain is F420-dependent glucose-6-phosphate dehydrogenase (334 aa).

A coenzyme F420-(gamma-Glu)n-binding site is contributed by aspartate 38. Catalysis depends on histidine 39, which acts as the Proton donor. Coenzyme F420-(gamma-Glu)n contacts are provided by residues threonine 75 and 106–107 (TG). The Proton acceptor role is filled by glutamate 108. Coenzyme F420-(gamma-Glu)n contacts are provided by residues asparagine 111, 175–176 (GG), and 178–179 (LV). 4 residues coordinate substrate: threonine 193, lysine 196, lysine 257, and arginine 281.

It belongs to the F420-dependent glucose-6-phosphate dehydrogenase family. In terms of assembly, homodimer.

It carries out the reaction oxidized coenzyme F420-(gamma-L-Glu)(n) + D-glucose 6-phosphate + H(+) = 6-phospho-D-glucono-1,5-lactone + reduced coenzyme F420-(gamma-L-Glu)(n). Functionally, catalyzes the coenzyme F420-dependent oxidation of glucose 6-phosphate (G6P) to 6-phosphogluconolactone. In Kribbella flavida (strain DSM 17836 / JCM 10339 / NBRC 14399), this protein is F420-dependent glucose-6-phosphate dehydrogenase.